The sequence spans 210 residues: Acyl-homoserine-lactone synthase (210 aa).

The protein belongs to the autoinducer synthase family.

The enzyme catalyses a fatty acyl-[ACP] + S-adenosyl-L-methionine = an N-acyl-L-homoserine lactone + S-methyl-5'-thioadenosine + holo-[ACP] + H(+). Its function is as follows. Required for the synthesis of OHHL (N-(3-oxohexanoyl)-L-homoserine lactone), an autoinducer molecule which binds to EsaR. OHHL is necessary for biosynthesis of EPS virulence factor (extracellular heteropolysaccharide) which plays a role in the development of Stewart's wilt on sweet corn. This is Acyl-homoserine-lactone synthase (esaI) from Pantoea stewartii subsp. stewartii (Erwinia stewartii).